The chain runs to 486 residues: N-succinylglutamate 5-semialdehyde dehydrogenase (486 aa).

220-225 (GSSRTG) contacts NAD(+). Active-site residues include E243 and C277.

It belongs to the aldehyde dehydrogenase family. AstD subfamily.

It catalyses the reaction N-succinyl-L-glutamate 5-semialdehyde + NAD(+) + H2O = N-succinyl-L-glutamate + NADH + 2 H(+). The protein operates within amino-acid degradation; L-arginine degradation via AST pathway; L-glutamate and succinate from L-arginine: step 4/5. Functionally, catalyzes the NAD-dependent reduction of succinylglutamate semialdehyde into succinylglutamate. This Shewanella sediminis (strain HAW-EB3) protein is N-succinylglutamate 5-semialdehyde dehydrogenase.